Here is a 370-residue protein sequence, read N- to C-terminus: Protein PAM71, chloroplastic (370 aa).

Residues 1-38 (MLSLNLSESLRIPFQNPRPPKSDFSSTSSSPSSSSRRC) form a disordered region. Residues 1 to 73 (MLSLNLSESL…RNESQQLGFR (73 aa)) constitute a chloroplast transit peptide. Residues 22-38 (SDFSSTSSSPSSSSRRC) are compositionally biased toward low complexity. Residues 74-113 (CFQRNDAACYLEKAESEEHDRNLDVLVESSIAHSRREIQR) are Stromal-facing. A helical transmembrane segment spans residues 114-134 (VLMFLAVSGSVALLGTDPAFA). Topologically, residues 135 to 161 (ASSIPNVTQSLVTSFGDLGDISSGFAS) are lumenal, thylakoid. A helical membrane pass occupies residues 162–182 (AFLLIFFSELGDKTFFIAALL). Topologically, residues 183 to 188 (AARNSA) are stromal. A helical membrane pass occupies residues 189-209 (ATVFVGTFGALGIMTIISVVL). Residues 210 to 228 (GRTFHYVDEVLPFRFGGTD) lie on the Lumenal, thylakoid side of the membrane. A helical membrane pass occupies residues 229–249 (LPIDDIAAVCLLVYFGVSTLL). Over 250 to 275 (DAVSDEGKADEEQKEAELAVSELSGN) the chain is Stromal. The helical transmembrane segment at 276–296 (GAGIVAAANTIISTFALVFVA) threads the bilayer. Residues 297-315 (EWGDKSFFSTIALAAASSP) lie on the Lumenal, thylakoid side of the membrane. Residues 316–336 (LGVIAGALAGHGAATLLAVLG) traverse the membrane as a helical segment. Residues 337–348 (GSLLGNFLSEKA) lie on the Stromal side of the membrane. A helical membrane pass occupies residues 349–369 (IAYVGGVLFLVFAAVTVAEIV). Position 370 (Thr370) is a topological domain, lumenal, thylakoid.

This sequence belongs to the GDT1 family. Homodimer.

The protein localises to the plastid. It localises to the chloroplast membrane. The protein resides in the thylakoid. Functionally, mn(2+)/H(+) exchanger, which transport Mn(2+)from the chloroplast stroma into the acidic thylakoid lumen. Might be a chloroplast-localized Ca(2+)/H(+) antiporter. Regulates Ca(2+), Mn(2+) and pH homeostasis. Required for chloroplast development. In Arabidopsis thaliana (Mouse-ear cress), this protein is Protein PAM71, chloroplastic.